Here is a 168-residue protein sequence, read N- to C-terminus: Mesencephalic astrocyte-derived neurotrophic factor homolog (168 aa).

A signal peptide spans 1–17 (MSRLVLLISLVIVVASA). Cystine bridges form between C22-C109, C25-C97, C55-C66, and C143-C146.

This sequence belongs to the ARMET family. Expressed in the intestine, spermatheca and nervous system. Expressed in the hypoderm. Expressed in structures of the excretory system. Not expressed in the male gonad.

The protein resides in the secreted. The protein localises to the endoplasmic reticulum lumen. Its function is as follows. Inhibits endoplasmic reticulum (ER) stress response. Retained in the ER under normal conditions and is up-regulated and secreted by the ER in response to ER stress and hypoxia. Following secretion by the ER, directly binds to 3-O-sulfogalactosylceramide, a lipid sulfatide in the outer cell membrane of target cells. Sulfatide binding promotes its cellular uptake by endocytosis, and is required for its role in alleviating ER stress under ER stress conditions. Has a neuroprotective role, ensuring survival of dopaminergic neurons during normal growth. This is Mesencephalic astrocyte-derived neurotrophic factor homolog from Caenorhabditis elegans.